A 231-amino-acid chain; its full sequence is Ribonuclease HII (231 aa).

The RNase H type-2 domain maps to 38 to 227 (ELVAGGDEAG…IKSFYGQLKL (190 aa)). Asp-44, Glu-45, and Asp-136 together coordinate a divalent metal cation.

The protein belongs to the RNase HII family. The cofactor is Mn(2+). Mg(2+) serves as cofactor.

Its subcellular location is the cytoplasm. The enzyme catalyses Endonucleolytic cleavage to 5'-phosphomonoester.. In terms of biological role, endonuclease that specifically degrades the RNA of RNA-DNA hybrids. This is Ribonuclease HII from Carboxydothermus hydrogenoformans (strain ATCC BAA-161 / DSM 6008 / Z-2901).